The sequence spans 500 residues: NAD(P)H-quinone oxidoreductase chain 4, chloroplastic (500 aa).

The next 14 membrane-spanning stretches (helical) occupy residues 4 to 24 (FPWLTIIVVLPIFAGSFIFFL), 35 to 55 (YTICICTLELLLTTYAFCYHF), 87 to 107 (IGPVLLTGFITTLATLAAWPV), 113 to 130 (LFHFLMLAMYSGQIGSFS), 134 to 154 (LLLFFIMWELELIPVYLLLSM), 167 to 187 (FILYTAGGSIFLLMGVLGVGL), 207 to 227 (VALEIIFYIGFFIAFAVKLPI), 242 to 262 (HYSTCMLLAGILLKMGAYGLI), 272 to 292 (AHSIFSPWLMIVGTIQIIYAA), 305 to 325 (IAYSSVSHMGFILIGIASITD), 330 to 350 (GAILQIISHGFIGAALFFLAG), 386 to 406 (LALPGMSGFVAEVIVFLGIIT), 416 to 436 (IVITFVMAIGMILTPIYLLSM), and 462 to 482 (LFVSISIFLPVIGIGMYPDFV).

It belongs to the complex I subunit 4 family.

The protein localises to the plastid. It localises to the chloroplast thylakoid membrane. It catalyses the reaction a plastoquinone + NADH + (n+1) H(+)(in) = a plastoquinol + NAD(+) + n H(+)(out). The catalysed reaction is a plastoquinone + NADPH + (n+1) H(+)(in) = a plastoquinol + NADP(+) + n H(+)(out). The polypeptide is NAD(P)H-quinone oxidoreductase chain 4, chloroplastic (Guizotia abyssinica (Niger)).